We begin with the raw amino-acid sequence, 728 residues long: Microtubule-associated protein VP5 (728 aa).

Belongs to the reoviridae microtubule-associated protein family.

The protein resides in the virion. Its subcellular location is the host cytoplasm. The protein localises to the host cytoskeleton. Minor inner capsid component. Displays NTPase and RNA 5'-triphosphatase (RTPase) activities. May function as a cofactor of polymerase. Associates with microtubules and plays a role in the formation, structural organization and morphology of viral inclusions, where the assembly of cores and the replication of viral RNA occur. In Aquareovirus C (isolate Golden shiner/USA/GSRV/1977) (AQRV-C), this protein is Microtubule-associated protein VP5 (S5).